We begin with the raw amino-acid sequence, 620 residues long: Probable potassium transport system protein Kup (620 aa).

12 helical membrane-spanning segments follow: residues 8 to 28, 50 to 70, 102 to 122, 136 to 156, 168 to 188, 211 to 231, 246 to 266, 284 to 304, 336 to 356, 368 to 388, 393 to 413, and 415 to 435; these read VGLLVSAVGVVFGDIGTSPLY, VLSLVFWTVMLLVTVKYVILI, MLLGVIAAALFYGDSMITPAI, PDLKAYVVPITALVLTGLFAI, FGPVMCLWFVTLALLGIANIV, LMSFYALGTVVLAVTGGEALY, WFSLVLPALLLNYFGQGALLI, MVMPMVALATLATVIASQAVI, IYVPFTNWTLYFAVMALVIGF, IAVTGTMMIDTILVSFVMALL, MALVIVVAGTLLLVDFAYFAA, and IIKVAQGGWFPLFIGFISFTV.

This sequence belongs to the HAK/KUP transporter (TC 2.A.72) family.

Its subcellular location is the cell inner membrane. It catalyses the reaction K(+)(in) + H(+)(in) = K(+)(out) + H(+)(out). In terms of biological role, transport of potassium into the cell. Likely operates as a K(+):H(+) symporter. The protein is Probable potassium transport system protein Kup of Rhodopseudomonas palustris (strain HaA2).